Here is a 61-residue protein sequence, read N- to C-terminus: Bactridin-1 (61 aa).

The LCN-type CS-alpha/beta domain maps to lysine 1–cysteine 61. Intrachain disulfides connect cysteine 11/cysteine 61, cysteine 15/cysteine 37, cysteine 23/cysteine 42, and cysteine 27/cysteine 44.

This sequence belongs to the long (4 C-C) scorpion toxin superfamily. Sodium channel inhibitor family. Beta subfamily. Expressed by the venom gland.

The protein localises to the secreted. Its function is as follows. Shows antibacterial activity against both Gram-positive bacteria (B.subtilis, M.luteus, E.faecalis) and Gram-negative bacteria (P.aeruginosa, Y.enterocolitica, A.calcoaceticus). Modifies membrane sodium permeability on Y.enterocolitica. Is toxic to cockroaches and crabs, but is not toxic to mice. Does not induce haemolysis in human erythrocytes. Acts by inhibiting the sodium (Nav) currents. The chain is Bactridin-1 from Tityus discrepans (Venezuelan scorpion).